Consider the following 490-residue polypeptide: Probable cytosol aminopeptidase (490 aa).

Residues Lys-257 and Asp-262 each coordinate Mn(2+). Lys-269 is an active-site residue. 3 residues coordinate Mn(2+): Asp-281, Asp-341, and Glu-343. Residue Arg-345 is part of the active site.

This sequence belongs to the peptidase M17 family. It depends on Mn(2+) as a cofactor.

Its subcellular location is the cytoplasm. The catalysed reaction is Release of an N-terminal amino acid, Xaa-|-Yaa-, in which Xaa is preferably Leu, but may be other amino acids including Pro although not Arg or Lys, and Yaa may be Pro. Amino acid amides and methyl esters are also readily hydrolyzed, but rates on arylamides are exceedingly low.. The enzyme catalyses Release of an N-terminal amino acid, preferentially leucine, but not glutamic or aspartic acids.. Functionally, presumably involved in the processing and regular turnover of intracellular proteins. Catalyzes the removal of unsubstituted N-terminal amino acids from various peptides. This is Probable cytosol aminopeptidase from Prochlorococcus marinus (strain AS9601).